The sequence spans 126 residues: MTKISVGLQLVTRDSREKLNNIVIKSSLRLNRSNPNISELCFLKTCHLCNKQLHQDKDVYMYRGDLGFCSRECRESQMLIDDRKELEASTKMMLASYRRCNNGAGKSESRNLFDDLRRRRQLFIVP.

Residues 41–85 (CFLKTCHLCNKQLHQDKDVYMYRGDLGFCSRECRESQMLIDDRKE) form an FLZ-type zinc finger.

The protein belongs to the FLZ family. As to quaternary structure, interacts with KIN10 and KIN11 via its FLZ-type zinc finger domain. Forms heterodimer with FLZ2 in vitro.

It localises to the nucleus. Its subcellular location is the cytoplasm. Functionally, may act as an adapter to facilitate the interaction of SnRK1 complex with effector proteins, conferring tissue- and stimulus-type specific differences in the SnRK1 regulation pathway. This is FCS-Like Zinc finger 17 from Arabidopsis thaliana (Mouse-ear cress).